Consider the following 695-residue polypeptide: Follicle-stimulating hormone receptor (695 aa).

An N-terminal signal peptide occupies residues M1 to G17. 2 cysteine pairs are disulfide-bonded: C18/C25 and C23/C32. In terms of domain architecture, LRRNT spans C18–R46. Over C18 to R366 the chain is Extracellular. LRR repeat units lie at residues V49–L72, E73–L97, H98–N118, L119–S143, L144–S169, F170–G192, T193–G216, A217–N240, and L241–E259. N-linked (GlcNAc...) asparagine glycans are attached at residues N191 and N199. Cystine bridges form between C275-C346, C276-C292, C276-C356, and C292-C338. Residue N293 is glycosylated (N-linked (GlcNAc...) asparagine). Sulfotyrosine is present on Y335. A helical transmembrane segment spans residues V367 to L387. The Cytoplasmic portion of the chain corresponds to I388 to R398. The helical transmembrane segment at F399–V421 threads the bilayer. The Extracellular portion of the chain corresponds to D422–D443. A disulfide bridge connects residues C442 and C517. A helical membrane pass occupies residues A444–L465. Residues E466 to H485 lie on the Cytoplasmic side of the membrane. Residues A486 to I508 traverse the membrane as a helical segment. Residues S509–Q528 are Extracellular-facing. A helical membrane pass occupies residues L529–T550. Topologically, residues H551–R573 are cytoplasmic. A helical transmembrane segment spans residues M574–L597. At K598 to K608 the chain is on the extracellular side. The helical transmembrane segment at I609–T630 threads the bilayer. Topologically, residues K631–N695 are cytoplasmic.

It belongs to the G-protein coupled receptor 1 family. FSH/LSH/TSH subfamily. In terms of assembly, homotrimer. Functions as a homotrimer binding the FSH hormone heterodimer composed of CGA and FSHB. Interacts with ARRB2. Interacts with APPL2; interaction is independent of follicle stimulating hormone stimulation. In terms of processing, N-glycosylated; indirectly required for FSH-binding, possibly via a conformational change that allows high affinity binding of hormone. Sulfated.

Its subcellular location is the cell membrane. G protein-coupled receptor for follitropin, the follicle-stimulating hormone. Through cAMP production activates the downstream PI3K-AKT and ERK1/ERK2 signaling pathways. The sequence is that of Follicle-stimulating hormone receptor (FSHR) from Sus scrofa (Pig).